A 247-amino-acid chain; its full sequence is MASLSRPSLPSCLCSFLLLLLLQVSSSYAGQFRVIGPRQPIRALVGDEVELPCRISPGKNATGMEVGWYRPPFSRVVHLYRNGRDQDGEQAPEYRGRTELLKDAIGEGKVTLRIRNVRFSDEGGFTCFFRDHSYQEEAAIELKVEDPFYWVSPAVLVLLAVLPVLLLQITVGLVFLCLQYRLRGKLRAEIENLHRTFDPHFLRVPCWKITLFVIVPVLGPLVALIICYNWLHRRLAGQFLEELRNPF.

The N-terminal stretch at Met-1 to Ala-29 is a signal peptide. At Gly-30–Ala-154 the chain is on the extracellular side. Positions Gln-31–Glu-145 constitute an Ig-like V-type domain. Cys-53 and Cys-127 are disulfide-bonded. A glycan (N-linked (GlcNAc...) asparagine) is linked at Asn-60. A helical transmembrane segment spans residues Val-155 to Phe-175. The Cytoplasmic portion of the chain corresponds to Leu-176–Thr-210. The helical transmembrane segment at Leu-211–Leu-231 threads the bilayer. Over His-232 to Phe-247 the chain is Extracellular.

Belongs to the immunoglobulin superfamily. BTN/MOG family. In terms of assembly, homodimer.

It is found in the membrane. Functionally, minor component of the myelin sheath. May be involved in completion and/or maintenance of the myelin sheath and in cell-cell communication. Mediates homophilic cell-cell adhesion. This chain is Myelin-oligodendrocyte glycoprotein (MOG), found in Macaca fascicularis (Crab-eating macaque).